The primary structure comprises 592 residues: uncharacterized protein (592 aa).

This is an uncharacterized protein from Acanthamoeba polyphaga mimivirus (APMV).